Consider the following 527-residue polypeptide: Protein SDS24 (527 aa).

Composition is skewed to low complexity over residues 1–22 and 55–74; these read MAST…LPTS and TPPT…TPAP. Residues 1–75 are disordered; that stretch reads MASTSNTFPP…PGCAATPAPL (75 aa). Phosphoserine is present on Ser-94. CBS domains lie at 114–175, 198–256, 283–342, and 443–512; these read IEQN…KITV, LTPK…NARS, TSRQ…QYPL, and LNSH…GNKE. Low complexity predominate over residues 424–447; sequence AQSSANGATPMSKSSSSTSLNSHS. Disordered stretches follow at residues 424-478 and 508-527; these read AQSS…TNTP and TGNK…SIAM. Residues Ser-458 and Ser-524 each carry the phosphoserine modification.

It belongs to the SDS23 family.

Its subcellular location is the cytoplasm. The protein localises to the nucleus. In terms of biological role, involved in DNA replication and cell separation during budding. In Saccharomyces cerevisiae (strain YJM789) (Baker's yeast), this protein is Protein SDS24 (SDS24).